The chain runs to 229 residues: Peptidase E (229 aa).

Active-site charge relay system residues include Ser-120, Asp-135, and His-157.

Belongs to the peptidase S51 family.

The protein localises to the cytoplasm. The catalysed reaction is Dipeptidase E catalyzes the hydrolysis of dipeptides Asp-|-Xaa. It does not act on peptides with N-terminal Glu, Asn or Gln, nor does it cleave isoaspartyl peptides.. In terms of biological role, hydrolyzes dipeptides containing N-terminal aspartate residues. May play a role in allowing the cell to use peptide aspartate to spare carbon otherwise required for the synthesis of the aspartate family of amino acids. In Salmonella paratyphi A (strain AKU_12601), this protein is Peptidase E.